Reading from the N-terminus, the 1135-residue chain is Potassium channel subfamily T member 2 (1135 aa).

Residues 1–63 (MVDLESEVPP…KNQRSSLRIR (63 aa)) lie on the Cytoplasmic side of the membrane. Residues 64–84 (LFNFSLKLLSCLLYIIRVLLE) form a helical membrane-spanning segment. Over 85–101 (NPSQGNEWSHIFWVNRS) the chain is Extracellular. N-linked (GlcNAc...) asparagine glycosylation occurs at Asn-99. A helical membrane pass occupies residues 102-122 (LPLWGLQVSVALISLFETILL). At 123 to 137 (GYLSYKGNIWEQILR) the chain is on the cytoplasmic side. Residues 138–158 (IPFILEIINAVPFIISIFWPS) traverse the membrane as a helical segment. Topologically, residues 159-164 (LRNLFV) are extracellular. A helical membrane pass occupies residues 165–185 (PVFLNCWLAKHALENMINDLH). Residues 186–198 (RAIQRTQSAMFNQ) are Cytoplasmic-facing. A helical transmembrane segment spans residues 199–219 (VLILISTLLCLIFTCICGIQH). At 220–228 (LERIGKKLN) the chain is on the extracellular side. The segment at residues 229 to 249 (LFDSLYFCIVTFSTVGFGDVT) is an intramembrane region (pore-forming). Residues 250 to 256 (PETWSSK) lie on the Extracellular side of the membrane. A helical membrane pass occupies residues 257–277 (LFVVAMICVALVVLPIQFEQL). Residues 278 to 1135 (AYLWMERQKS…GQDSREETQL (858 aa)) are Cytoplasmic-facing. 2 consecutive RCK N-terminal domains span residues 299–435 (EKHV…DHVV) and 718–858 (NKLI…CYSL). Disordered regions lie at residues 977–1010 (VEEW…HPLL), 1017–1036 (WARR…AEKI), and 1113–1135 (SEPS…ETQL). Residues 1017 to 1030 (WARRLSRKGPKHSG) are compositionally biased toward basic residues. Residues 1118–1127 (RNSICNVTGQ) show a composition bias toward polar residues.

The protein belongs to the potassium channel family. Calcium-activated (TC 1.A.1.3) subfamily. KCa4.2/KCNT2 sub-subfamily. Homotetramer. Forms heteromeric channels with KCNT1; these heterodimer channels differ from the homomers in their unitary conductance, kinetic behavior, subcellular localization, and response to activation of protein kinase C. Phosphorylated by protein kinase C. Phosphorylation of the C-terminal domain inhibits channel activity.

The protein resides in the cell membrane. It carries out the reaction K(+)(in) = K(+)(out). Are normally in a closed state unless activated by an increase in intracellular Na(+) and Cl(-). Inhibited upon stimulation of G-protein coupled receptors, such as CHRM1 and GRM1. There is conflicting data about the effect of ATP on KNCT2 channels activity. Intracellular ATP was initially report to inhibit the channel activity. However, others studies conclude that KNCT2 channels are not inhibited by intracellular ATP. Its function is as follows. Sodium-activated and chloride-activated potassium channel. Produces rapidly activating outward rectifier K(+) currents. Contributes to regulate neuronal excitability. This Homo sapiens (Human) protein is Potassium channel subfamily T member 2 (KCNT2).